Consider the following 448-residue polypeptide: tRNA(Ile)-lysidine synthase (448 aa).

25 to 30 (SGGSDS) contacts ATP.

The protein belongs to the tRNA(Ile)-lysidine synthase family.

It is found in the cytoplasm. The enzyme catalyses cytidine(34) in tRNA(Ile2) + L-lysine + ATP = lysidine(34) in tRNA(Ile2) + AMP + diphosphate + H(+). Ligates lysine onto the cytidine present at position 34 of the AUA codon-specific tRNA(Ile) that contains the anticodon CAU, in an ATP-dependent manner. Cytidine is converted to lysidine, thus changing the amino acid specificity of the tRNA from methionine to isoleucine. The sequence is that of tRNA(Ile)-lysidine synthase from Brucella melitensis biotype 2 (strain ATCC 23457).